Here is a 305-residue protein sequence, read N- to C-terminus: Elongation factor Ts (305 aa).

The segment at 81–84 is involved in Mg(2+) ion dislocation from EF-Tu; it reads TDFV.

It belongs to the EF-Ts family.

It is found in the cytoplasm. Its function is as follows. Associates with the EF-Tu.GDP complex and induces the exchange of GDP to GTP. It remains bound to the aminoacyl-tRNA.EF-Tu.GTP complex up to the GTP hydrolysis stage on the ribosome. In Nitratiruptor sp. (strain SB155-2), this protein is Elongation factor Ts.